Here is a 220-residue protein sequence, read N- to C-terminus: Sec-independent protein translocase protein TatB (220 aa).

A helical transmembrane segment spans residues Met-1–Gly-21. The tract at residues Lys-192 to Gln-220 is disordered.

It belongs to the TatB family. As to quaternary structure, the Tat system comprises two distinct complexes: a TatABC complex, containing multiple copies of TatA, TatB and TatC subunits, and a separate TatA complex, containing only TatA subunits. Substrates initially bind to the TatABC complex, which probably triggers association of the separate TatA complex to form the active translocon.

It is found in the cell inner membrane. In terms of biological role, part of the twin-arginine translocation (Tat) system that transports large folded proteins containing a characteristic twin-arginine motif in their signal peptide across membranes. Together with TatC, TatB is part of a receptor directly interacting with Tat signal peptides. TatB may form an oligomeric binding site that transiently accommodates folded Tat precursor proteins before their translocation. This chain is Sec-independent protein translocase protein TatB, found in Yersinia pestis bv. Antiqua (strain Antiqua).